A 547-amino-acid chain; its full sequence is Fimbria adhesin EcpD (547 aa).

Residues 1 to 20 form the signal peptide; it reads MRVNLLIAMIIFALIWPATA.

It belongs to the EcpD/MatE family. As to quaternary structure, forms polymers. Interacts with EcpA.

The protein resides in the fimbrium. Functionally, part of the ecpRABCDE operon, which encodes the E.coli common pilus (ECP). ECP is found in both commensal and pathogenic strains and plays a dual role in early-stage biofilm development and host cell recognition. Tip pilus adhesin, which is required for assembly of EcpA into fibers. This Escherichia coli O127:H6 (strain E2348/69 / EPEC) protein is Fimbria adhesin EcpD (ecpD).